A 29-amino-acid chain; its full sequence is Trypsin inhibitor 5 (29 aa).

3 disulfide bridges follow: Cys3–Cys20, Cys10–Cys22, and Cys16–Cys28.

Belongs to the protease inhibitor I7 (squash-type serine protease inhibitor) family.

The protein resides in the secreted. Functionally, strongly inhibits trypsin, weakly inhibits chymotrypsin. This chain is Trypsin inhibitor 5, found in Cyclanthera pedata (Achocha).